Here is a 408-residue protein sequence, read N- to C-terminus: D-galactonate dehydratase family member OG2516_05608 (408 aa).

Residue aspartate 215 participates in Mg(2+) binding. A D-arabinonate-binding site is contributed by histidine 217. Mg(2+) contacts are provided by glutamate 241 and glutamate 267. 4 residues coordinate D-arabinonate: glutamate 267, arginine 288, histidine 317, and glutamate 344.

It belongs to the mandelate racemase/muconate lactonizing enzyme family. GalD subfamily.

Its function is as follows. Has no detectable activity with D-mannonate and with a panel of 70 other acid sugars (in vitro), in spite of the conservation of the residues that are expected to be important for catalytic activity and cofactor binding. May have evolved a divergent function. This is D-galactonate dehydratase family member OG2516_05608 from Oceanicola granulosus (strain ATCC BAA-861 / DSM 15982 / KCTC 12143 / HTCC2516).